We begin with the raw amino-acid sequence, 457 residues long: Argininosuccinate lyase (457 aa).

It belongs to the lyase 1 family. Argininosuccinate lyase subfamily.

The protein resides in the cytoplasm. It catalyses the reaction 2-(N(omega)-L-arginino)succinate = fumarate + L-arginine. It functions in the pathway amino-acid biosynthesis; L-arginine biosynthesis; L-arginine from L-ornithine and carbamoyl phosphate: step 3/3. The polypeptide is Argininosuccinate lyase (Pasteurella multocida (strain Pm70)).